The following is a 777-amino-acid chain: Semaphorin-4F (777 aa).

Positions 1-40 (MLARAERPRPGPRPPPVSLFPPPSSLLLLLLAMLSAPVCG) are cleaved as a signal peptide. Over 41 to 667 (RVPRSVPRTS…PANRAHTVVG (627 aa)) the chain is Extracellular. One can recognise a Sema domain in the interval 48–516 (RTSLPISEAD…SHTEVTQVNT (469 aa)). The N-linked (GlcNAc...) asparagine glycan is linked to N70. Cysteines 118 and 128 form a disulfide. An N-linked (GlcNAc...) asparagine glycan is attached at N139. Cystine bridges form between C146–C155, C279–C390, and C303–C349. An N-linked (GlcNAc...) asparagine glycan is attached at N515. The 52-residue stretch at 518–569 (NCGRLQSCSECILAQDPVCAWSFRLDACVAHAGEHRGMVQDIESADVSSLCP) folds into the PSI domain. 3 disulfides stabilise this stretch: C519–C536, C528–C545, and C593–C634. The Ig-like C2-type domain maps to 586 to 641 (VGHVVLPCSPSSAWASCVWHQPSGVTSLTPRRDGLEVVVTPGAMGAYACECQEGGA). Residues 668–688 (AGLVGFFLGVLAASLTLLLIG) traverse the membrane as a helical segment. Residues 689–777 (RRQQRRRQRE…PLATCDETSI (89 aa)) lie on the Cytoplasmic side of the membrane. The interval 703 to 742 (DKVGLDLGAPPSGTTSYSQDPPSPSPEDERLPLALGKRGS) is disordered. 2 positions are modified to phosphoserine: S725 and S727. Residues 775 to 777 (TSI) carry the PDZ-binding motif.

Belongs to the semaphorin family. As to quaternary structure, interacts (via PDZ-binding motif) with DLG4/SAP90 (via PDZ domain 2); this interaction may promote translocation of DLG4/SAP90 to the membrane. As to expression, expressed throughout the adult brain, where it shows particularly strong expression in the hippocampus, corpus callosum, granular layer and deep nuclei of the cerebellum, and the mitral layer of the olfactory bulb (at protein level). At the cellular level, detected in neuronal precursors, postmitotic neurons, pyramidal neurons, and glial cells including mature oligodendocytes and oligodendroglial precursor cells (at protein level).

Its subcellular location is the cell membrane. It is found in the postsynaptic density. The protein resides in the perikaryon. The protein localises to the cell projection. It localises to the dendrite. In terms of biological role, probable cell surface receptor that regulates oligodendroglial precursor cell migration. Might also regulate differentiation of oligodendroglial precursor cells. Has growth cone collapse activity against retinal ganglion-cell axons. This chain is Semaphorin-4F (Sema4f), found in Mus musculus (Mouse).